We begin with the raw amino-acid sequence, 277 residues long: Putative gamma-glutamylcyclotransferase YkqA (277 aa).

Residue 8 to 11 (YGTL) participates in substrate binding. Catalysis depends on E205, which acts as the Proton acceptor.

This sequence belongs to the gamma-glutamylcyclotransferase family.

Its function is as follows. Putative gamma-glutamylcyclotransferase. The sequence is that of Putative gamma-glutamylcyclotransferase YkqA (ykqA) from Bacillus subtilis (strain 168).